Consider the following 603-residue polypeptide: MRTDYCGLIDTRYLDQTVTVKGWVHRRRDHGGVIFIDLRDREGLVQVVIDPDTPEAFATADSARNEFVLSITGRVRRRPEGTTNAKMISGEIELLAKEIEILNAAATPPFQIDDENLSETVRLTNRVIDLRRPAMQKNLRLRYQVAMGVRRYLDAQGFIDIETPMLTRSTPEGARDYLVPSRVHPGEFFALPQSPQLFKQLLMVAGFDRYYQIVKCFRDEDLRADRQPEFTQIDLETSFLNEDDIMDITEGMARQVFHDAMDVELGDFPRMTYADAMHYYGSDKPDLRVSLKFAELTDVMKDVPFKVFNAAANLPNGRVVALRVPGGAKLSRKEIDEYTQFVGIYGAKGLAYIKVNDVSKLTTDETSGLQSPIVKNLTEGVLKSIVERTGAENGDIIFFGADKAKVVNEAIGALRIRIGHEHGEAGGYFVREWRPLWVVDFPMFEYDEDDDRWTACHHPFTSPKPGHEDLMATDPGACIARAYDMVLNGWEIGGGSIRIHRADVQEKVFGALKISPEEQQNKFGFLLDNLKFGAPPHGGLAFGLDRLVTLMAGADSIRDVIAFPKTQRAQCLLTNAPNAVDEKQLKELSLRLRQKADVAGGAA.

Position 172 (glutamate 172) interacts with L-aspartate. An aspartate region spans residues 196–199; the sequence is QLFK. Residue arginine 218 participates in L-aspartate binding. ATP is bound by residues 218–220 and glutamine 227; that span reads RDE. Histidine 457 lines the L-aspartate pocket. Position 491 (glutamate 491) interacts with ATP. Position 498 (arginine 498) interacts with L-aspartate. 543–546 contributes to the ATP binding site; that stretch reads GLDR.

The protein belongs to the class-II aminoacyl-tRNA synthetase family. Type 1 subfamily. In terms of assembly, homodimer.

It localises to the cytoplasm. It catalyses the reaction tRNA(Asx) + L-aspartate + ATP = L-aspartyl-tRNA(Asx) + AMP + diphosphate. Its function is as follows. Aspartyl-tRNA synthetase with relaxed tRNA specificity since it is able to aspartylate not only its cognate tRNA(Asp) but also tRNA(Asn). Reaction proceeds in two steps: L-aspartate is first activated by ATP to form Asp-AMP and then transferred to the acceptor end of tRNA(Asp/Asn). The sequence is that of Aspartate--tRNA(Asp/Asn) ligase from Laribacter hongkongensis (strain HLHK9).